The sequence spans 361 residues: MAGNSIGQHFRVMTFGESHGIALGCIVDGCPPGLEITEADLQIDLDRRRPGTSLYTTQRREADEVKILSGVFEGKTTGTSIGLLIENTDQRSTDYSDIKDKFRPGHADYTYHQKYGIRDYRGGGRSSARETAMRVAAGAIAKKYLKQEFGVEIRAYLSQMGDVCIDKVDWNEIENNAFFCPDADKVAAFDQLIRDLKKEGDSIGAKIQVVATNLPVGLGEPVFDRLDADIAHALMSINAVKGVEIGDGFDVVQQKGSQHRDPLTPNGFRSNHAGGILGGISTGQDIVASIALKPTSSITVPGDTITRTGEPTQLITKGRHDPCVGIRAVPIAEAMLAIVLMDHLLRHRGQNFAVQTETPKI.

Arg-48 is a binding site for NADP(+). Residues 125–127 (RSS), 238–239 (NA), Gly-278, 293–297 (KPTSS), and Arg-319 contribute to the FMN site.

This sequence belongs to the chorismate synthase family. In terms of assembly, homotetramer. It depends on FMNH2 as a cofactor.

It catalyses the reaction 5-O-(1-carboxyvinyl)-3-phosphoshikimate = chorismate + phosphate. It participates in metabolic intermediate biosynthesis; chorismate biosynthesis; chorismate from D-erythrose 4-phosphate and phosphoenolpyruvate: step 7/7. Functionally, catalyzes the anti-1,4-elimination of the C-3 phosphate and the C-6 proR hydrogen from 5-enolpyruvylshikimate-3-phosphate (EPSP) to yield chorismate, which is the branch point compound that serves as the starting substrate for the three terminal pathways of aromatic amino acid biosynthesis. This reaction introduces a second double bond into the aromatic ring system. In Vibrio anguillarum (strain ATCC 68554 / 775) (Listonella anguillarum), this protein is Chorismate synthase.